The sequence spans 667 residues: tRNA 5-methylaminomethyl-2-thiouridine biosynthesis bifunctional protein MnmC (667 aa).

The span at methionine 1–isoleucine 12 shows a compositional bias: polar residues. Positions methionine 1 to histidine 20 are disordered. The segment at methionine 1–glutamate 240 is tRNA (mnm(5)s(2)U34)-methyltransferase. The tract at residues isoleucine 268–leucine 667 is FAD-dependent cmnm(5)s(2)U34 oxidoreductase.

This sequence in the N-terminal section; belongs to the methyltransferase superfamily. tRNA (mnm(5)s(2)U34)-methyltransferase family. It in the C-terminal section; belongs to the DAO family. The cofactor is FAD.

It localises to the cytoplasm. The catalysed reaction is 5-aminomethyl-2-thiouridine(34) in tRNA + S-adenosyl-L-methionine = 5-methylaminomethyl-2-thiouridine(34) in tRNA + S-adenosyl-L-homocysteine + H(+). Catalyzes the last two steps in the biosynthesis of 5-methylaminomethyl-2-thiouridine (mnm(5)s(2)U) at the wobble position (U34) in tRNA. Catalyzes the FAD-dependent demodification of cmnm(5)s(2)U34 to nm(5)s(2)U34, followed by the transfer of a methyl group from S-adenosyl-L-methionine to nm(5)s(2)U34, to form mnm(5)s(2)U34. The chain is tRNA 5-methylaminomethyl-2-thiouridine biosynthesis bifunctional protein MnmC from Magnetococcus marinus (strain ATCC BAA-1437 / JCM 17883 / MC-1).